Here is a 263-residue protein sequence, read N- to C-terminus: Acyl-[acyl-carrier-protein]--UDP-N-acetylglucosamine O-acyltransferase (263 aa).

The protein belongs to the transferase hexapeptide repeat family. LpxA subfamily. Homotrimer.

Its subcellular location is the cytoplasm. The enzyme catalyses a (3R)-hydroxyacyl-[ACP] + UDP-N-acetyl-alpha-D-glucosamine = a UDP-3-O-[(3R)-3-hydroxyacyl]-N-acetyl-alpha-D-glucosamine + holo-[ACP]. The protein operates within glycolipid biosynthesis; lipid IV(A) biosynthesis; lipid IV(A) from (3R)-3-hydroxytetradecanoyl-[acyl-carrier-protein] and UDP-N-acetyl-alpha-D-glucosamine: step 1/6. Involved in the biosynthesis of lipid A, a phosphorylated glycolipid that anchors the lipopolysaccharide to the outer membrane of the cell. This chain is Acyl-[acyl-carrier-protein]--UDP-N-acetylglucosamine O-acyltransferase, found in Xanthomonas axonopodis pv. citri (strain 306).